The following is a 312-amino-acid chain: Protoheme IX farnesyltransferase (312 aa).

A run of 8 helical transmembrane segments spans residues 12-32 (LALTKPRVIELLLVATIPAML), 41-61 (FGLILLTLIGGWMGAGAANTF), 93-113 (VFAWVLLIASVLWLGFLCHSW), 114-134 (LAAGFIVLTNWFYVFVYTKWL), 141-161 (NVIWGGAAGCMPVIVGWAVIT), 168-188 (FHAGWSSWLQAIILFMIIFFW), 240-260 (VPAASWIYLAAALISGGWFII), and 290-310 (ILFVALSVDAVLGWQTLAHAV).

It belongs to the UbiA prenyltransferase family. Protoheme IX farnesyltransferase subfamily.

The protein localises to the cell membrane. The enzyme catalyses heme b + (2E,6E)-farnesyl diphosphate + H2O = Fe(II)-heme o + diphosphate. Its pathway is porphyrin-containing compound metabolism; heme O biosynthesis; heme O from protoheme: step 1/1. Converts heme B (protoheme IX) to heme O by substitution of the vinyl group on carbon 2 of heme B porphyrin ring with a hydroxyethyl farnesyl side group. The protein is Protoheme IX farnesyltransferase of Corynebacterium jeikeium (strain K411).